Consider the following 644-residue polypeptide: Probable lysophospholipase 2 (644 aa).

The first 19 residues, 1–19, serve as a signal peptide directing secretion; sequence MYFQSFYFLALLLATAVYG. Residues Asn-44, Asn-96, Asn-141, Asn-178, Asn-221, Asn-245, Asn-253, Asn-281, Asn-286, Asn-316, Asn-319, Asn-373, Asn-393, Asn-449, Asn-501, Asn-558, Asn-579, and Asn-596 are each glycosylated (N-linked (GlcNAc...) asparagine). The PLA2c domain occupies 53-600; that stretch reads SCDSSEIMVN…SQYCWNGTVD (548 aa).

Belongs to the lysophospholipase family.

Its subcellular location is the secreted. The catalysed reaction is a 1-acyl-sn-glycero-3-phosphocholine + H2O = sn-glycerol 3-phosphocholine + a fatty acid + H(+). In terms of biological role, catalyzes the release of fatty acids from lysophospholipids. The sequence is that of Probable lysophospholipase 2 (plb2) from Schizosaccharomyces pombe (strain 972 / ATCC 24843) (Fission yeast).